Reading from the N-terminus, the 134-residue chain is Small ribosomal subunit protein uS11 (134 aa).

Belongs to the universal ribosomal protein uS11 family. As to quaternary structure, part of the 30S ribosomal subunit. Interacts with proteins S7 and S18. Binds to IF-3.

Its function is as follows. Located on the platform of the 30S subunit, it bridges several disparate RNA helices of the 16S rRNA. Forms part of the Shine-Dalgarno cleft in the 70S ribosome. The sequence is that of Small ribosomal subunit protein uS11 from Micrococcus luteus (strain ATCC 4698 / DSM 20030 / JCM 1464 / CCM 169 / CCUG 5858 / IAM 1056 / NBRC 3333 / NCIMB 9278 / NCTC 2665 / VKM Ac-2230) (Micrococcus lysodeikticus).